A 214-amino-acid polypeptide reads, in one-letter code: DELTA-actitoxin-Aeq1b (214 aa).

A signal peptide spans 1–19; it reads MSRLIIVFIVVTMICAATA. A propeptide spanning residues 20-35 is cleaved from the precursor; sequence LSSKKSINEDEKDEKR. Positions 38-47 are plays an important role in the hemolytic activity; the sequence is AVAGAVIEGA. The segment at 46 to 65 is N-terminal region; it reads GATLTFNVLQTVLKALGDIS. Residues Ser-89, Val-122, Ser-140, Pro-142, Tyr-168, Tyr-172, and Tyr-173 each contribute to the phosphocholine site. Residues 140–155 are trp-rich region, which is important for the binding to lipid membrane; the sequence is SIPFDYNLYSNWWNVK. The Cell attachment site, crucial for protein stability signature appears at 179–181; it reads RGD.

Belongs to the actinoporin family. Sea anemone subfamily. Octamer or nonamer in membranes. Monomer in the soluble state.

It is found in the secreted. It localises to the nematocyst. Its subcellular location is the target cell membrane. Functionally, pore-forming protein that forms cations-selective hydrophilic pores of around 1 nm and causes cytolysis. Pore formation is a multi-step process that involves specific recognition of membrane sphingomyelin (but neither cholesterol nor phosphatidylcholine) using aromatic rich region and adjacent phosphocholine (POC) binding site, firm binding to the membrane (mainly driven by hydrophobic interactions) accompanied by the transfer of the N-terminal region to the lipid-water interface and finally pore formation after oligomerization of monomers. This chain is DELTA-actitoxin-Aeq1b, found in Actinia equina (Beadlet anemone).